The primary structure comprises 1279 residues: Cellulose synthase operon protein C (1279 aa).

Residues 1 to 21 (MRRHTLAIAILAALASTASVA) form the signal peptide. TPR repeat units lie at residues 27 to 60 (QSLL…SPDQ), 62 to 94 (DALY…SPVP), 218 to 250 (ADET…HPDD), 306 to 339 (VDAL…PGGA), 384 to 417 (PGAA…HPGD), 460 to 493 (ALRA…DPEN), 495 to 527 (WTRF…QPNQ), 606 to 639 (PERV…NPNP), 719 to 752 (ALGV…NPNN), and 787 to 820 (PEIL…ENAM).

The protein operates within glycan metabolism; bacterial cellulose biosynthesis. Functionally, required for maximal bacterial cellulose synthesis. This chain is Cellulose synthase operon protein C (bscS), found in Pseudomonas fluorescens (strain SBW25).